Consider the following 258-residue polypeptide: Imidazole glycerol phosphate synthase subunit HisF (258 aa).

Catalysis depends on residues Asp12 and Asp131.

The protein belongs to the HisA/HisF family. Heterodimer of HisH and HisF.

It is found in the cytoplasm. It carries out the reaction 5-[(5-phospho-1-deoxy-D-ribulos-1-ylimino)methylamino]-1-(5-phospho-beta-D-ribosyl)imidazole-4-carboxamide + L-glutamine = D-erythro-1-(imidazol-4-yl)glycerol 3-phosphate + 5-amino-1-(5-phospho-beta-D-ribosyl)imidazole-4-carboxamide + L-glutamate + H(+). The protein operates within amino-acid biosynthesis; L-histidine biosynthesis; L-histidine from 5-phospho-alpha-D-ribose 1-diphosphate: step 5/9. IGPS catalyzes the conversion of PRFAR and glutamine to IGP, AICAR and glutamate. The HisF subunit catalyzes the cyclization activity that produces IGP and AICAR from PRFAR using the ammonia provided by the HisH subunit. This is Imidazole glycerol phosphate synthase subunit HisF from Corynebacterium glutamicum (strain R).